We begin with the raw amino-acid sequence, 248 residues long: Granulin (248 aa).

Belongs to the polyhedrin family.

In terms of biological role, component of the virus occlusion bodies, which are large proteinaceous structures, that protect the virus from the outside environment for extended periods until they are ingested by insect larvae. The protein is Granulin of Zygaenidae (burnets).